Here is a 145-residue protein sequence, read N- to C-terminus: Large ribosomal subunit protein uL16 (145 aa).

Belongs to the universal ribosomal protein uL16 family. As to quaternary structure, part of the 50S ribosomal subunit.

Its function is as follows. Binds 23S rRNA and is also seen to make contacts with the A and possibly P site tRNAs. The polypeptide is Large ribosomal subunit protein uL16 (Lactobacillus gasseri (strain ATCC 33323 / DSM 20243 / BCRC 14619 / CIP 102991 / JCM 1131 / KCTC 3163 / NCIMB 11718 / NCTC 13722 / AM63)).